The sequence spans 137 residues: Sporulation-specific cell division protein SsgB (137 aa).

This sequence belongs to the SsgA family. In terms of assembly, interacts with SsgA. Interacts with FtsZ (via N-terminus).

The protein localises to the cell septum. Functionally, involved in sporulation-specific cell division. Required for early stages of sporulation. Important in the process of growth cessation prior to sporulation-specific cell division. Recruits cell division protein FtsZ to the future septum sites and tethers the contractile ring structure (Z ring) to the cytoplasmic membrane during sporulation. Stimulates polymerization and filament length of FtsZ in vitro. This chain is Sporulation-specific cell division protein SsgB, found in Streptomyces coelicolor (strain ATCC BAA-471 / A3(2) / M145).